The sequence spans 1475 residues: Gag-Pol polyprotein (1475 aa).

Residues 130–147 (TQNTQNKKQTSNQTNTQS) are compositionally biased toward low complexity. Residues 130–159 (TQNTQNKKQTSNQTNTQSLPAITTQDGTPR) form a disordered region. 2 consecutive CCHC-type zinc fingers follow at residues 403-420 (RRCYGCGKTGHLKRNCKQ) and 421-438 (QKCYHCGKPGHQARNCRS). The Peptidase A2 domain maps to 492–565 (VKGLVDTGAD…TPVNLFGRSL (74 aa)). Asp497 is a catalytic residue. The Reverse transcriptase domain maps to 619–806 (EGKISEAAWD…ERVKWIGFEL (188 aa)). The RNase H type-1 domain occupies 999 to 1119 (RENLTTYYTD…ADEGVKKALE (121 aa)). The Integrase-type zinc-finger motif lies at 1199-1240 (ENIPSATEDHERWHTSPDILVRQFHLPKRIAKEIVARCQECK). Positions 1208, 1212, 1236, and 1239 each coordinate Zn(2+). The Integrase catalytic domain occupies 1248–1400 (RGTNPRGRFL…TPYEIYLESE (153 aa)). The segment at residues 1419–1465 (KWCYVRNRRKEWKGPYKVLWDGDGAAVIEEEGKTALYPHRHMRFIPP) is a DNA-binding region (integrase-type).

As to quaternary structure, interacts with host light chain cytoplasmic dynein DYNLL1; this interaction is critical for intracellular microtubule-dependent viral genome transport. Specific enzymatic cleavages by the viral protease yield mature proteins. The protease is released by autocatalytic cleavage. The polyprotein is cleaved during and after budding, this process is termed maturation.

The protein resides in the virion. It catalyses the reaction DNA(n) + a 2'-deoxyribonucleoside 5'-triphosphate = DNA(n+1) + diphosphate. The enzyme catalyses Endohydrolysis of RNA in RNA/DNA hybrids. Three different cleavage modes: 1. sequence-specific internal cleavage of RNA. Human immunodeficiency virus type 1 and Moloney murine leukemia virus enzymes prefer to cleave the RNA strand one nucleotide away from the RNA-DNA junction. 2. RNA 5'-end directed cleavage 13-19 nucleotides from the RNA end. 3. DNA 3'-end directed cleavage 15-20 nucleotides away from the primer terminus.. It carries out the reaction 3'-end directed exonucleolytic cleavage of viral RNA-DNA hybrid.. Matrix protein p16 forms the outer shell of the core of the virus, lining the inner surface of the viral membrane. Its function is as follows. Capsid protein p26 forms the conical core of the virus that encapsulates the genomic RNA-nucleocapsid complex. Interaction between incoming particle-associated Gag proteins and host dynein allows intracellular microtubule-dependent virus transport toward the perinuclear region, prior to nucleus translocation and integration into host genome. Functionally, the aspartyl protease mediates proteolytic cleavages of Gag and Gag-Pol polyproteins during or shortly after the release of the virion from the plasma membrane. Cleavages take place as an ordered, step-wise cascade to yield mature proteins. This process is called maturation. Displays maximal activity during the budding process just prior to particle release from the cell. In terms of biological role, reverse transcriptase/ribonuclease H (RT) is a multifunctional enzyme that converts the viral RNA genome into dsDNA in the cytoplasm, shortly after virus entry into the cell. This enzyme displays a DNA polymerase activity that can copy either DNA or RNA templates, and a ribonuclease H (RNase H) activity that cleaves the RNA strand of RNA-DNA heteroduplexes in a partially processive 3' to 5' endonucleasic mode. Conversion of viral genomic RNA into dsDNA requires many steps. A tRNA binds to the primer-binding site (PBS) situated at the 5'-end of the viral RNA. RT uses the 3' end of the tRNA primer to perform a short round of RNA-dependent minus-strand DNA synthesis. The reading proceeds through the U5 region and ends after the repeated (R) region which is present at both ends of viral RNA. The portion of the RNA-DNA heteroduplex is digested by the RNase H, resulting in a ssDNA product attached to the tRNA primer. This ssDNA/tRNA hybridizes with the identical R region situated at the 3' end of viral RNA. This template exchange, known as minus-strand DNA strong stop transfer, can be either intra- or intermolecular. RT uses the 3' end of this newly synthesized short ssDNA to perform the RNA-dependent minus-strand DNA synthesis of the whole template. RNase H digests the RNA template except for a polypurine tract (PPT) situated at the 5'-end of the genome. It is not clear if both polymerase and RNase H activities are simultaneous. RNase H probably can proceed both in a polymerase-dependent (RNA cut into small fragments by the same RT performing DNA synthesis) and a polymerase-independent mode (cleavage of remaining RNA fragments by free RTs). Secondly, RT performs DNA-directed plus-strand DNA synthesis using the PPT that has not been removed by RNase H as primer. PPT and tRNA primers are then removed by RNase H. The 3' and 5' ssDNA PBS regions hybridize to form a circular dsDNA intermediate. Strand displacement synthesis by RT to the PBS and PPT ends produces a blunt ended, linear dsDNA copy of the viral genome that includes long terminal repeats (LTRs) at both ends. Integrase catalyzes viral DNA integration into the host chromosome, by performing a series of DNA cutting and joining reactions. This enzyme activity takes place after virion entry into a cell and reverse transcription of the RNA genome in dsDNA. This Bovine immunodeficiency virus (strain R29) (BIV) protein is Gag-Pol polyprotein (gag-pol).